Consider the following 744-residue polypeptide: Spalt-like protein sem-4 (744 aa).

The interval 6–32 (AEMAAVSSRRKQSKPRRMSGEGDAMMS) is disordered. Residues 13-22 (SRRKQSKPRR) are compositionally biased toward basic residues. 4 consecutive C2H2-type zinc fingers follow at residues 99 to 124 (SSCPIQSCSQSFSSPAALTWHVLDAH), 305 to 327 (NQCILCRRVLSCKSALQMHYRTH), 333 to 355 (FKCKICQRAFTTKGNLKTHMGVH), and 411 to 433 (QQCPICQQRFLNAGELAVHITEH). Over residues 487 to 497 (KNDSSPNTDTS) the composition is skewed to polar residues. 2 disordered regions span residues 487 to 530 (KNDS…RQDI) and 542 to 562 (KLEEPPILEQQVSTTPNPKNE). Basic and acidic residues predominate over residues 499–509 (VEEKITRDDPP). Residues 513 to 525 (SLSPSNSSDSSSS) are compositionally biased toward low complexity. The span at 551-561 (QQVSTTPNPKN) shows a compositional bias: polar residues. C2H2-type zinc fingers lie at residues 589 to 611 (HQCGVCFKHFSSSSALQIHMRTH), 617 to 639 (FKCDMCGRAFTTRGNLKVHMGTH), and 701 to 723 (TVCSVCQKVCQSPNELEQHLKEH). The disordered stretch occupies residues 725–744 (NNGSSAAPTPLASAATPPPS). The span at 728–744 (SSAAPTPLASAATPPPS) shows a compositional bias: low complexity.

Belongs to the sal C2H2-type zinc-finger protein family.

The protein localises to the nucleus. In terms of biological role, transcription factor, involved in positive and negative modulation of transcription. Binds to multiple DNA sequence motifs in the regulatory elements of target genes, including homeobox selector egl-5 and LIM homeobox mec-3. Involved in cell-fate regulation in multiple lineages, including neuronal, mesodermal and vulval. Required to regulate the fate of PLM touch receptor neurons, acting via negative modulation of transcription of egl-5 and mec-3. May modulate gene expression by interacting with different transcription factors during neuronal and mesodermal cell development. Promotes the proliferative sex myoblast (SM) fate, in a cell autonomous manner, acting via the SoxC transcription factor sem-2. Involved in vulval cell-fate determination, acting by regulating expression of homeobox protein lin-39, and may link lin-39 to incoming signaling pathways. Plays a role in detoxification of reactive oxygen species (ROS), by regulating expression of transcription factor skn-1 and the phase II detoxification genes. The protein is Spalt-like protein sem-4 of Caenorhabditis elegans.